The chain runs to 455 residues: Hexokinase-2 (455 aa).

The Hexokinase domain maps to 3–445; the sequence is ANFQQAVKKL…SGIGAALCAL (443 aa). Positions 57–195 are hexokinase small subdomain; that stretch reads TGAETGDFLA…NLPIRIEAVI (139 aa). 68 to 73 is a binding site for ATP; the sequence is DFGGTN. Substrate contacts are provided by residues 144-145, 161-162, and 196-197; these read SY, TK, and ND. Residues 196 to 434 form a hexokinase large subdomain region; the sequence is NDTVGTLVTR…KLISIGIAKD (239 aa). Thr222 contributes to the ATP binding site. Substrate contacts are provided by Asn225, Glu252, and Glu283. Residues 288 to 289, 325 to 329, and 400 to 404 contribute to the ATP site; these read GM, TSVLS, and SLVEH.

The protein belongs to the hexokinase family. Monomer.

It catalyses the reaction a D-hexose + ATP = a D-hexose 6-phosphate + ADP + H(+). It carries out the reaction D-mannose + ATP = D-mannose 6-phosphate + ADP + H(+). The catalysed reaction is D-fructose + ATP = D-fructose 6-phosphate + ADP + H(+). The enzyme catalyses D-glucose + ATP = D-glucose 6-phosphate + ADP + H(+). The protein operates within carbohydrate metabolism; hexose metabolism. Its pathway is carbohydrate degradation; glycolysis; D-glyceraldehyde 3-phosphate and glycerone phosphate from D-glucose: step 1/4. Functionally, catalyzes the phosphorylation of hexose (six-carbon sugars) to hexose 6-phosphate. Phosphorylates D-glucose, D-fructose and D-mannose. Compared to hxk1, has a much higher affinity for D-glucose. Constitutes the initial enzyme of glycolysis by catalyzing the phosphorylation of glucose to D-glucose 6-phosphate. This chain is Hexokinase-2, found in Schizosaccharomyces pombe (strain 972 / ATCC 24843) (Fission yeast).